A 273-amino-acid chain; its full sequence is MSDMHSLLIAAILGVVEGLTEFLPVSSTGHMIIVGHLLGFEGDTAKTFEVVIQLGSILAVVVMFWRRLFGLIGIHFGRPLQREGESKGQLTLIHILLGMIPAMVLGLVFHDTIKSLFNPINVMYALVVGGLLLIAAECLKPKEPRAPGLDDMTYRQAFMIGCFQCLALWPGFSRSGATISGGMLMGVSRYAASEFSFLLAVPMMMGATVLDLYKSWSFLSAADIPMFAVGFVTAFVVALIAIKTFLQLIKRISFIPFAIYRFVVAAAVYVVFF.

7 helical membrane passes run 6–26, 45–65, 90–110, 116–136, 190–210, 222–242, and 252–272; these read SLLIAAILGVVEGLTEFLPVS, AKTFEVVIQLGSILAVVVMFW, LTLIHILLGMIPAMVLGLVFH, LFNPINVMYALVVGGLLLIAA, YAASEFSFLLAVPMMMGATVL, ADIPMFAVGFVTAFVVALIAI, and ISFIPFAIYRFVVAAAVYVVF.

The protein belongs to the UppP family.

The protein localises to the cell inner membrane. The enzyme catalyses di-trans,octa-cis-undecaprenyl diphosphate + H2O = di-trans,octa-cis-undecaprenyl phosphate + phosphate + H(+). Catalyzes the dephosphorylation of undecaprenyl diphosphate (UPP). Confers resistance to bacitracin. This is Undecaprenyl-diphosphatase from Salmonella arizonae (strain ATCC BAA-731 / CDC346-86 / RSK2980).